The following is a 141-amino-acid chain: Small ribosomal subunit protein uS12 (141 aa).

Residues 1-11 (MPTISQLVTTS) show a composition bias toward polar residues. Residues 1–22 (MPTISQLVTTSRQDKNYKSKSP) form a disordered region. Residue aspartate 102 is modified to 3-methylthioaspartic acid.

Belongs to the universal ribosomal protein uS12 family. In terms of assembly, part of the 30S ribosomal subunit. Contacts proteins S8 and S17. May interact with IF1 in the 30S initiation complex.

Its function is as follows. With S4 and S5 plays an important role in translational accuracy. Interacts with and stabilizes bases of the 16S rRNA that are involved in tRNA selection in the A site and with the mRNA backbone. Located at the interface of the 30S and 50S subunits, it traverses the body of the 30S subunit contacting proteins on the other side and probably holding the rRNA structure together. The combined cluster of proteins S8, S12 and S17 appears to hold together the shoulder and platform of the 30S subunit. The protein is Small ribosomal subunit protein uS12 of Acholeplasma laidlawii (strain PG-8A).